The chain runs to 396 residues: Elongation factor Tu (396 aa).

Residues 10 to 206 (KPHCNIGTIG…NVDEYIPQPE (197 aa)) enclose the tr-type G domain. Positions 19-26 (GHVDHGKT) are G1. GTP is bound at residue 19–26 (GHVDHGKT). Thr-26 is a Mg(2+) binding site. Residues 60–64 (GITIS) form a G2 region. A G3 region spans residues 81-84 (DCPG). Residues 81-85 (DCPGH) and 136-139 (NKCD) contribute to the GTP site. The segment at 136-139 (NKCD) is G4. Residues 174–176 (SAL) form a G5 region.

This sequence belongs to the TRAFAC class translation factor GTPase superfamily. Classic translation factor GTPase family. EF-Tu/EF-1A subfamily. As to quaternary structure, monomer.

The protein resides in the cytoplasm. The catalysed reaction is GTP + H2O = GDP + phosphate + H(+). Its function is as follows. GTP hydrolase that promotes the GTP-dependent binding of aminoacyl-tRNA to the A-site of ribosomes during protein biosynthesis. In Bradyrhizobium diazoefficiens (strain JCM 10833 / BCRC 13528 / IAM 13628 / NBRC 14792 / USDA 110), this protein is Elongation factor Tu.